Reading from the N-terminus, the 68-residue chain is Coiled-coil domain-containing protein 179 (68 aa).

A disordered region spans residues 11 to 68 (SQVNPEGPRQHHPSEVTERQLANKRIQNMQHLKKEKRRLNKRFSRPSPIPEPGLLWSS). Positions 18–28 (PRQHHPSEVTE) are enriched in basic and acidic residues. Residues 27 to 53 (TERQLANKRIQNMQHLKKEKRRLNKRF) adopt a coiled-coil conformation. A compositionally biased stretch (basic residues) spans 41–54 (HLKKEKRRLNKRFS).

The chain is Coiled-coil domain-containing protein 179 (CCDC179) from Homo sapiens (Human).